We begin with the raw amino-acid sequence, 283 residues long: Homeobox protein BarH-like 2 (283 aa).

Disordered regions lie at residues 107 to 141 and 198 to 283; these read AAAA…RRSR and KGGQ…PPLS. Polar residues predominate over residues 122 to 132; the sequence is SSESETEQPTP. Residues 139 to 198 constitute a DNA-binding region (homeobox); sequence RSRTIFTELQLMGLEKKFQKQKYLSTPDRLDLAQSLGLTQLQVKTWYQNRRMKWKKMVLK. A compositionally biased stretch (low complexity) spans 268–277; the sequence is QPQELSEASS.

The protein belongs to the BAR homeobox family. Nervous system, particularly in the telencephalon, spinal cord, and dorsal root ganglia.

Its subcellular location is the nucleus. Its function is as follows. Transcription factor. Binds optimally to the DNA consensus sequence 5'-YYTAATGRTTTTY-3'. May control the expression of neural adhesion molecules such as L1 or Ng-CAM during embryonic development of both the central and peripherical nervous system. May be involved in controlling adhesive processes in keratinizing epithelia. The polypeptide is Homeobox protein BarH-like 2 (Barx2) (Mus musculus (Mouse)).